The primary structure comprises 296 residues: Maltose/maltodextrin transport system permease protein MalG (296 aa).

Residues 1–12 (MAMVQPKSQKAR) lie on the Cytoplasmic side of the membrane. The helical transmembrane segment at 13–35 (LFITHLLLLLFIAAIMFPLLMVV) threads the bilayer. The Periplasmic portion of the chain corresponds to 36–88 (AISLRQGNFATGSLIPEQISWDHWKLALGFSVEQADGRITPPPFPVLLWLWNS). The ABC transmembrane type-1 domain occupies 85-281 (LWNSVKVAGI…LPITIVFLLA (197 aa)). A helical transmembrane segment spans residues 89-111 (VKVAGISAIGIVALSTTCAYAFA). Residues 112 to 123 (RMRFPGKATLLK) are Cytoplasmic-facing. Residues 124–143 (GMLIFQMFPAVLSLVALYAL) form a helical membrane-spanning segment. The Periplasmic portion of the chain corresponds to 144 to 152 (FDRLGEYIP). Residues 153-175 (FIGLNTHGGVIFAYLGGIALHVW) traverse the membrane as a helical segment. Residues 176–204 (TIKGYFETIDSSLEEAAALDGATPWQAFR) lie on the Cytoplasmic side of the membrane. Residues 205 to 227 (LVLLPLSVPILAVVFILSFIAAI) form a helical membrane-spanning segment. Residues 228-257 (TEVPVASLLLRDVNSYTLAVGMQQYLNPQN) are Periplasmic-facing. Residues 258–280 (YLWGDFAAAAVMSALPITIVFLL) traverse the membrane as a helical segment. The Cytoplasmic segment spans residues 281–296 (AQRWLVNGLTAGGVKG).

Belongs to the binding-protein-dependent transport system permease family. MalFG subfamily. As to quaternary structure, the complex is composed of two ATP-binding proteins (MalK), two transmembrane proteins (MalG and MalF) and a solute-binding protein (MalE).

The protein resides in the cell inner membrane. In terms of biological role, part of the ABC transporter complex MalEFGK involved in maltose/maltodextrin import. Probably responsible for the translocation of the substrate across the membrane. The sequence is that of Maltose/maltodextrin transport system permease protein MalG (malG) from Escherichia coli O157:H7.